Reading from the N-terminus, the 415-residue chain is MGIKNLTKFIKEKCQEAYVTENINELSFKKIAIDTPMYMYKYKSMNAAKMVENNGIYYNPDGWLWSFIYFIYSLRKHDIHPIFILEGGYPEEKNKTRMARKKDREDVKKKTLSLEESISSYATSLRLRPEDIPQDLKEEWNKIAKKNNLPFEDFDFETVKDHVKQRHRYDIRITNRDYEKLKILLKIMNTPFIQAPMEAEAFCAYLYKKKIIHGIASNDSDILAYGCNLIVDFEFDVKIDEETKISKITYINYDYLLNKLDLQSSEFLDFCIMCGTDYNDNIYRIGAVKSYELIKVQKCIENVGKFLDPNNKKGTILILNHLRIRHIFNHYGMKNIDDVTNMQFLEKKASWSSVPNFYLLTMLTIKFNINIDLEWIRHGFEKCNIKWDCESEYEENVEKTNVEETNNEVDEFPIF.

The tract at residues 1–114 (MGIKNLTKFI…EDVKKKTLSL (114 aa)) is N-domain. Mg(2+) contacts are provided by Asp-34, Glu-86, Glu-198, Glu-200, Asp-219, Asp-221, and Asp-277. The segment at 163 to 297 (VKQRHRYDIR…VKSYELIKVQ (135 aa)) is I-domain.

This sequence belongs to the XPG/RAD2 endonuclease family. Mg(2+) is required as a cofactor.

It localises to the host nucleus. In terms of biological role, probable endonuclease. The protein is Probable RAD2-like endonuclease 369L of Acheta domesticus (House cricket).